Reading from the N-terminus, the 472-residue chain is Sodium-coupled neutral amino acid transporter 5 (472 aa).

N-acetylmethionine is present on Met-1. Residues 1-48 (MELQDPKMNGALPSDAVGYRQEREGFLPSRGPAPGSKPVQFMDFEGKT) lie on the Cytoplasmic side of the membrane. A helical membrane pass occupies residues 49-71 (SFGMSVFNLSNAIMGSGILGLAY). At 72 to 87 (AMAHTGVIFFLALLLC) the chain is on the extracellular side. Residues 88-108 (IALLSSYSIHLLLTCAGIAGI) form a helical membrane-spanning segment. Residues 109 to 125 (RAYEQLGQRAFGPAGKV) lie on the Cytoplasmic side of the membrane. A helical transmembrane segment spans residues 126–146 (VVATVICLHNVGAMSSYLFII). Residues 147-166 (KSELPLVIGTFLYMDPEGDW) lie on the Extracellular side of the membrane. Residues 167–187 (FLKGNLLIIIVSVLIILPLAL) traverse the membrane as a helical segment. Residues 188–192 (MKHLG) are Cytoplasmic-facing. Residues 193-213 (YLGYTSGLSLTCMLFFLVSVI) form a helical membrane-spanning segment. At 214-257 (YKKFQLGCAIGHNETAMESEALVGLPSQGLNSSCEAQMFTVDSQ) the chain is on the extracellular side. Cys-221 and Cys-247 form a disulfide bridge. Asn-226 is a glycosylation site (N-linked (GlcNAc...) asparagine). The chain crosses the membrane as a helical span at residues 258–278 (MSYTVPIMAFAFVCHPEVLPI). The Cytoplasmic segment spans residues 279 to 295 (YTELCRPSKRRMQAVAN). The helical transmembrane segment at 296–316 (VSIGAMFCMYGLTATFGYLTF) threads the bilayer. Over 317–334 (YSSVKAEMLHMYSQKDPL) the chain is Extracellular. The chain crosses the membrane as a helical span at residues 335–355 (ILCVRLAVLLAVTLTVPVVLF). The Cytoplasmic portion of the chain corresponds to 356–376 (PIRRALQQLLFPGKAFSWPRH). Residues 377 to 397 (VAIALILLVLVNVLVICVPTI) traverse the membrane as a helical segment. Topologically, residues 398–399 (RD) are extracellular. The helical transmembrane segment at 400-420 (IFGVIGSTSAPSLIFILPSIF) threads the bilayer. Residues 421–439 (YLRIVPSEVEPFLSWPKIQ) are Cytoplasmic-facing. Residues 440–460 (ALCFGVLGVLFMAVSLGFMFA) traverse the membrane as a helical segment. Over 461-472 (NWATGQSRMSGH) the chain is Extracellular.

This sequence belongs to the amino acid/polyamine transporter 2 family. As to expression, predominantly expressed in stomach, brain, liver, lung and intestinal tract.

The protein localises to the cell membrane. The catalysed reaction is L-serine(out) + Na(+)(out) + H(+)(in) = L-serine(in) + Na(+)(in) + H(+)(out). The enzyme catalyses L-alanine(out) + Na(+)(out) + H(+)(in) = L-alanine(in) + Na(+)(in) + H(+)(out). It carries out the reaction glycine(out) + Na(+)(out) + H(+)(in) = glycine(in) + Na(+)(in) + H(+)(out). It catalyses the reaction L-glutamine(out) + Na(+)(out) + H(+)(in) = L-glutamine(in) + Na(+)(in) + H(+)(out). The catalysed reaction is L-asparagine(out) + Na(+)(out) + H(+)(in) = L-asparagine(in) + Na(+)(in) + H(+)(out). The enzyme catalyses L-histidine(out) + Na(+)(out) + H(+)(in) = L-histidine(in) + Na(+)(in) + H(+)(out). It carries out the reaction L-cysteine(out) + Na(+)(out) + H(+)(in) = L-cysteine(in) + Na(+)(in) + H(+)(out). Not inhibited by lithium. Partial allosteric regulation on ions sodium binding. Symporter that cotransports neutral amino acids and sodium ions, coupled to an H(+) antiporter activity. Releases L-glutamine and glycine from astroglial cells and may participate in the glutamate/GABA-L-glutamine cycle and the NMDA receptors activation. In addition, contributes significantly to L-glutamine uptake in retina, namely in ganglion and Mueller cells therefore, participates in the retinal glutamate-glutamine cycle. The transport activity is pH sensitive and Li(+) tolerant. Moreover functions in both direction and is associated with large uncoupled fluxes of protons. The transport is electroneutral coupled to the cotransport of 1 Na(+) and the antiport of 1 H(+). May have a particular importance for modulation of net hepatic glutamine flux. The protein is Sodium-coupled neutral amino acid transporter 5 (SLC38A5) of Homo sapiens (Human).